Here is a 414-residue protein sequence, read N- to C-terminus: F-box protein At3g47030 (414 aa).

The interval 1-24 (MSGMLGLSAVMGKRPKQQVTARPR) is disordered. The F-box domain occupies 28-77 (IEKPEEIPDDLLIDVFSRLSIEDVARCRCLSRFWSSILRRRYFTELFHKM).

This Arabidopsis thaliana (Mouse-ear cress) protein is F-box protein At3g47030.